A 585-amino-acid polypeptide reads, in one-letter code: Protein NRT1/ PTR FAMILY 8.3 (585 aa).

G2 carries the N-acetylglycine modification. The chain crosses the membrane as a helical span at residues 91-111 (WQGTCYLTPLIGAVLADAYWG). T115 is subject to Phosphothreonine. The next 10 membrane-spanning stretches (helical) occupy residues 116–136 (IACF…SASV), 154–174 (PAQY…TGGI), 200–220 (FFNW…SLLV), 228–248 (WGLG…SFFF), 351–371 (FPIW…STMF), 387–407 (LPPA…VPLY), 431–451 (MGIG…VEII), 472–492 (VLWQ…YFIG), 511–531 (ALAL…LTLV), and 556–576 (FFWL…FSAA).

Belongs to the major facilitator superfamily. Proton-dependent oligopeptide transporter (POT/PTR) (TC 2.A.17) family. As to expression, highly expressed in young leaves, roots and germinating seeds, intermediately in stems, flowers and mature leaves and at low level in siliques.

It is found in the vacuole membrane. Inhibited by leucyl-ethionine. Functionally, peptide transporter. Mediates the transport of di- and tripeptides. High affinity, low capacity transporter. Can also transport histidine. The polypeptide is Protein NRT1/ PTR FAMILY 8.3 (NPF8.3) (Arabidopsis thaliana (Mouse-ear cress)).